The primary structure comprises 118 residues: UPF0329 protein ECU03_0030/ECU05_0040/ECU06_0010/ECU06_1710/ECU11_0010 (118 aa).

Belongs to the UPF0329 family.

The polypeptide is UPF0329 protein ECU03_0030/ECU05_0040/ECU06_0010/ECU06_1710/ECU11_0010 (Encephalitozoon cuniculi (strain GB-M1) (Microsporidian parasite)).